The following is a 365-amino-acid chain: Peptide chain release factor 2 (365 aa).

N5-methylglutamine is present on Q251.

The protein belongs to the prokaryotic/mitochondrial release factor family. Post-translationally, methylated by PrmC. Methylation increases the termination efficiency of RF2.

Its subcellular location is the cytoplasm. Peptide chain release factor 2 directs the termination of translation in response to the peptide chain termination codons UGA and UAA. The sequence is that of Peptide chain release factor 2 from Sulfurimonas denitrificans (strain ATCC 33889 / DSM 1251) (Thiomicrospira denitrificans (strain ATCC 33889 / DSM 1251)).